A 232-amino-acid polypeptide reads, in one-letter code: Large ribosomal subunit protein uL1 (232 aa).

It belongs to the universal ribosomal protein uL1 family. As to quaternary structure, part of the 50S ribosomal subunit.

Functionally, binds directly to 23S rRNA. The L1 stalk is quite mobile in the ribosome, and is involved in E site tRNA release. In terms of biological role, protein L1 is also a translational repressor protein, it controls the translation of the L11 operon by binding to its mRNA. The chain is Large ribosomal subunit protein uL1 from Alkaliphilus metalliredigens (strain QYMF).